Reading from the N-terminus, the 594-residue chain is MAAPVDGSSGGWAARALRRALALTSLTTLALLASLTGLLLSGPAGALPTLGPGWQRQNPDPPVSRTRSLLLDAASGQLRLEDGFHPDAVAWANLTNAIRETGWAYLDLSTNGRYNDSLQAYAAGVVEASVSEELIYMHWMNTVVNYCGPFEYEVGYCEKLKNFLEANLEWMQREMELNPDSPYWHQVRLTLLQLKGLEDSYEGRLTFPTGRFTIKPLGFLLLQISGDLEDLEPALNKTNTKPSLGSGSCSALIKLLPGGHDLLVAHNTWNSYQNMLRIIKKYRLQFREGPQEEYPLVAGNNLVFSSYPGTIFSGDDFYILGSGLVTLETTIGNKNPALWKYVQPQGCVLEWIRNVVANRLALDGATWADVFKRFNSGTYNNQWMIVDYKAFLPNGPSPGSRVLTILEQIPGMVVVADKTAELYKTTYWASYNIPYFETVFNASGLQALVAQYGDWFSYTKNPRAKIFQRDQSLVEDMDAMVRLMRYNDFLHDPLSLCEACNPKPNAENAISARSDLNPANGSYPFQALHQRAHGGIDVKVTSFTLAKYMSMLAASGPTWDQCPPFQWSKSPFHSMLHMGQPDLWMFSPIRVPWD.

An N-terminal signal peptide occupies residues 1-46 (MAAPVDGSSGGWAARALRRALALTSLTTLALLASLTGLLLSGPAGA). N-linked (GlcNAc...) asparagine glycans are attached at residues Asn-93 and Asn-115. A disulfide bridge connects residues Cys-147 and Cys-157. Residues Asn-236 and Asn-441 are each glycosylated (N-linked (GlcNAc...) asparagine). Cysteines 497 and 500 form a disulfide. Asn-520 carries an N-linked (GlcNAc...) asparagine glycan.

It belongs to the phospholipase B-like family. In terms of assembly, interacts with IGF2R. The p76 protein is synthesized as a 76 kDa precursor which is then processed into a N-terminal 28 kDa form and a C-terminal 40 kDa form. The C-terminal peptide is further processed into a 15 kDa form. In terms of processing, glycosylated; contains mannose 6-phosphate sugars. As to expression, present at highest levels in spleen, lung and brain (at protein level).

Its subcellular location is the lysosome lumen. In terms of biological role, putative phospholipase. This is Putative phospholipase B-like 2 (Plbd2) from Mus musculus (Mouse).